Reading from the N-terminus, the 642-residue chain is Dihydrolipoyllysine-residue acetyltransferase component of pyruvate dehydrogenase complex, mitochondrial (642 aa).

The transit peptide at M1–Y85 directs the protein to the mitochondrion. A disordered region spans residues P80–S99. Lipoyl-binding domains are found at residues H90–V166 and H217–V293. At S99 the chain carries Phosphoserine. Residues K131 and K258 each carry the N6-lipoyllysine modification. The interval L313–P346 is disordered. Over residues A317 to P337 the composition is skewed to pro residues. Residues F351–V388 enclose the Peripheral subunit-binding (PSBD) domain. R456 contacts CoA. N6-acetyllysine is present on K461. An N6-succinyllysine modification is found at K468. Residue S470 coordinates CoA. K542 is subject to N6-succinyllysine. Positions 561, 562, and 586 each coordinate CoA. Residues H615 and D619 contribute to the active site.

It belongs to the 2-oxoacid dehydrogenase family. As to quaternary structure, part of the pyruvate dehydrogenase complex (PDHc) that is a multi-enzyme complex composed of multiple copies of three enzymes, pyruvate dehydrogenase (subunits PDH1A and PDHB, E1 component), dihydrolipoamide acetyltransferase (DLAT, E2 component), and dihydrolipoamide dehydrogenase (DLD, E3 component) to which is added an additional protein the E3-binding protein (PDHX, E3BP). In terms of structural architecture, the E2 and E3BP components assemble into a 60meric central core with icosahedral symmetry. The central core is decorated with E1 and E3 proteins. Currently, two alternative models for the E2:E3BP stoichiometry are considered as being either 48:12 (E2(48)-E3BP(12)) or 40:20 (E2(40)-E3BP(20)). Interacts with PDK2 and PDK3. Interacts with SIRT4. Interacts with PDHB. The cofactor is (R)-lipoate. In terms of processing, delipoylated at Lys-131 and Lys-258 by SIRT4, delipoylation decreases the PHD complex activity.

It is found in the mitochondrion matrix. It carries out the reaction N(6)-[(R)-dihydrolipoyl]-L-lysyl-[protein] + acetyl-CoA = N(6)-[(R)-S(8)-acetyldihydrolipoyl]-L-lysyl-[protein] + CoA. As part of the pyruvate dehydrogenase complex, catalyzes the transfers of an acetyl group to a lipoic acid moiety. The pyruvate dehydrogenase complex, catalyzes the overall conversion of pyruvate to acetyl-CoA and CO(2), and thereby links cytoplasmic glycolysis and the mitochondrial tricarboxylic acid (TCA) cycle. The sequence is that of Dihydrolipoyllysine-residue acetyltransferase component of pyruvate dehydrogenase complex, mitochondrial from Mus musculus (Mouse).